The primary structure comprises 224 residues: 7-cyano-7-deazaguanine synthase (224 aa).

10–20 (LSGGLDSATVV) is a binding site for ATP. Residues cysteine 189, cysteine 199, cysteine 202, and cysteine 205 each contribute to the Zn(2+) site.

Belongs to the QueC family. It depends on Zn(2+) as a cofactor.

The catalysed reaction is 7-carboxy-7-deazaguanine + NH4(+) + ATP = 7-cyano-7-deazaguanine + ADP + phosphate + H2O + H(+). It functions in the pathway purine metabolism; 7-cyano-7-deazaguanine biosynthesis. Functionally, catalyzes the ATP-dependent conversion of 7-carboxy-7-deazaguanine (CDG) to 7-cyano-7-deazaguanine (preQ(0)). The polypeptide is 7-cyano-7-deazaguanine synthase (Pseudomonas putida (strain ATCC 700007 / DSM 6899 / JCM 31910 / BCRC 17059 / LMG 24140 / F1)).